The following is a 38-amino-acid chain: Potassium channel toxin alpha-KTx 3.17 (38 aa).

Intrachain disulfides connect C8–C28, C14–C33, and C18–C35.

This sequence belongs to the short scorpion toxin superfamily. Potassium channel inhibitor family. Alpha-KTx 03 subfamily. As to expression, expressed by the venom gland.

The protein resides in the secreted. In terms of biological role, completely inhibits the (125)I-kaliotoxin binding on rat brain synaptosomes with high-affinity (IC(50)=0.1 nM). Is a potent Kv1.3/KCNA3 ligand. The chain is Potassium channel toxin alpha-KTx 3.17 from Buthus paris (Scorpion).